Reading from the N-terminus, the 652-residue chain is DNA ligase (652 aa).

NAD(+)-binding positions include 29–33, 78–79, and Glu-107; these read DSEYD and SL. Lys-109 functions as the N6-AMP-lysine intermediate in the catalytic mechanism. Arg-130, Glu-164, Lys-278, and Lys-302 together coordinate NAD(+). Cys-395, Cys-398, Cys-413, and Cys-418 together coordinate Zn(2+). In terms of domain architecture, BRCT spans 577 to 652; it reads DRQAELFGLT…IEDEDWLLNL (76 aa).

Belongs to the NAD-dependent DNA ligase family. LigA subfamily. Requires Mg(2+) as cofactor. The cofactor is Mn(2+).

The enzyme catalyses NAD(+) + (deoxyribonucleotide)n-3'-hydroxyl + 5'-phospho-(deoxyribonucleotide)m = (deoxyribonucleotide)n+m + AMP + beta-nicotinamide D-nucleotide.. DNA ligase that catalyzes the formation of phosphodiester linkages between 5'-phosphoryl and 3'-hydroxyl groups in double-stranded DNA using NAD as a coenzyme and as the energy source for the reaction. It is essential for DNA replication and repair of damaged DNA. The protein is DNA ligase of Streptococcus equi subsp. zooepidemicus (strain MGCS10565).